An 85-amino-acid chain; its full sequence is Large ribosomal subunit protein bL27 (85 aa).

Belongs to the bacterial ribosomal protein bL27 family.

The chain is Large ribosomal subunit protein bL27 from Campylobacter curvus (strain 525.92).